Here is a 74-residue protein sequence, read N- to C-terminus: RNA-binding protein Hfq (74 aa).

The 61-residue stretch at 9 to 69 folds into the Sm domain; it reads DQFLNQLRKE…ISTFMPQKNV (61 aa).

It belongs to the Hfq family. Homohexamer.

Functionally, RNA chaperone that binds small regulatory RNA (sRNAs) and mRNAs to facilitate mRNA translational regulation in response to envelope stress, environmental stress and changes in metabolite concentrations. Also binds with high specificity to tRNAs. This chain is RNA-binding protein Hfq, found in Bacillus cytotoxicus (strain DSM 22905 / CIP 110041 / 391-98 / NVH 391-98).